The chain runs to 1407 residues: DNA-directed RNA polymerase subunit beta' (1407 aa).

Zn(2+) is bound by residues C70, C72, C85, and C88. Mg(2+) contacts are provided by D460, D462, and D464. Zn(2+) is bound by residues C814, C888, C895, and C898. At K972 the chain carries N6-acetyllysine.

Belongs to the RNA polymerase beta' chain family. The RNAP catalytic core consists of 2 alpha, 1 beta, 1 beta' and 1 omega subunit. When a sigma factor is associated with the core the holoenzyme is formed, which can initiate transcription. Mg(2+) serves as cofactor. The cofactor is Zn(2+).

It catalyses the reaction RNA(n) + a ribonucleoside 5'-triphosphate = RNA(n+1) + diphosphate. Its function is as follows. DNA-dependent RNA polymerase catalyzes the transcription of DNA into RNA using the four ribonucleoside triphosphates as substrates. The protein is DNA-directed RNA polymerase subunit beta' of Shigella flexneri serotype 5b (strain 8401).